The following is a 357-amino-acid chain: RNA 3'-terminal phosphate cyclase (357 aa).

Residues glutamine 102 and 293 to 296 (HMGD) each bind ATP. Catalysis depends on histidine 319, which acts as the Tele-AMP-histidine intermediate.

The protein belongs to the RNA 3'-terminal cyclase family. Type 1 subfamily.

It localises to the cytoplasm. It carries out the reaction a 3'-end 3'-phospho-ribonucleotide-RNA + ATP = a 3'-end 2',3'-cyclophospho-ribonucleotide-RNA + AMP + diphosphate. Catalyzes the conversion of 3'-phosphate to a 2',3'-cyclic phosphodiester at the end of RNA. The mechanism of action of the enzyme occurs in 3 steps: (A) adenylation of the enzyme by ATP; (B) transfer of adenylate to an RNA-N3'P to produce RNA-N3'PP5'A; (C) and attack of the adjacent 2'-hydroxyl on the 3'-phosphorus in the diester linkage to produce the cyclic end product. The biological role of this enzyme is unknown but it is likely to function in some aspects of cellular RNA processing. The sequence is that of RNA 3'-terminal phosphate cyclase from Staphylothermus marinus (strain ATCC 43588 / DSM 3639 / JCM 9404 / F1).